Reading from the N-terminus, the 142-residue chain is Transcriptional regulator MraZ (142 aa).

SpoVT-AbrB domains lie at 5 to 51 and 77 to 120; these read ASSL…PRPE and AMDV…DKAS.

It belongs to the MraZ family. As to quaternary structure, forms oligomers.

The protein resides in the cytoplasm. It is found in the nucleoid. This Verminephrobacter eiseniae (strain EF01-2) protein is Transcriptional regulator MraZ.